The sequence spans 425 residues: Serine--tRNA ligase (425 aa).

Residue 228 to 230 coordinates L-serine; that stretch reads TAE. 259 to 261 lines the ATP pocket; it reads RSE. An L-serine-binding site is contributed by Glu-282. Position 346-349 (346-349) interacts with ATP; that stretch reads EIAS. Position 382 (Ser-382) interacts with L-serine.

Belongs to the class-II aminoacyl-tRNA synthetase family. Type-1 seryl-tRNA synthetase subfamily. In terms of assembly, homodimer. The tRNA molecule binds across the dimer.

The protein localises to the cytoplasm. It carries out the reaction tRNA(Ser) + L-serine + ATP = L-seryl-tRNA(Ser) + AMP + diphosphate + H(+). It catalyses the reaction tRNA(Sec) + L-serine + ATP = L-seryl-tRNA(Sec) + AMP + diphosphate + H(+). It participates in aminoacyl-tRNA biosynthesis; selenocysteinyl-tRNA(Sec) biosynthesis; L-seryl-tRNA(Sec) from L-serine and tRNA(Sec): step 1/1. Catalyzes the attachment of serine to tRNA(Ser). Is also able to aminoacylate tRNA(Sec) with serine, to form the misacylated tRNA L-seryl-tRNA(Sec), which will be further converted into selenocysteinyl-tRNA(Sec). The protein is Serine--tRNA ligase of Rickettsia felis (strain ATCC VR-1525 / URRWXCal2) (Rickettsia azadi).